The primary structure comprises 294 residues: tRNA dimethylallyltransferase (294 aa).

10–17 (GPTAVGKT) provides a ligand contact to ATP. Substrate is bound at residue 12–17 (TAVGKT). Residues 35 to 38 (DSQQ) are interaction with substrate tRNA.

The protein belongs to the IPP transferase family. Monomer. Mg(2+) is required as a cofactor.

The enzyme catalyses adenosine(37) in tRNA + dimethylallyl diphosphate = N(6)-dimethylallyladenosine(37) in tRNA + diphosphate. In terms of biological role, catalyzes the transfer of a dimethylallyl group onto the adenine at position 37 in tRNAs that read codons beginning with uridine, leading to the formation of N6-(dimethylallyl)adenosine (i(6)A). The polypeptide is tRNA dimethylallyltransferase (Streptococcus mutans serotype c (strain ATCC 700610 / UA159)).